Here is a 39-residue protein sequence, read N- to C-terminus: Potassium channel toxin alpha-KTx 31.1 (39 aa).

Intrachain disulfides connect Cys7/Cys30, Cys13/Cys35, and Cys17/Cys37.

The protein belongs to the short scorpion toxin superfamily. Potassium channel inhibitor family. Alpha-KTx 31 subfamily. In terms of tissue distribution, expressed by the venom gland.

It localises to the secreted. In terms of biological role, voltage-gated potassium channel inhibitor. 1 uM of the native toxin inhibits rat Kv1.2/KCNA2 (100% inhibition), and drosophila Shaker IR/Sh (100%), human Kv1.3/KCNA3 (83%), rat Kv1.1/KCNA1 (32%) and rat Kv1.6/KCNA6 (21%). The polypeptide is Potassium channel toxin alpha-KTx 31.1 (Buthus occitanus tunetanus (Common European scorpion)).